The following is a 202-amino-acid chain: Matrix protein (202 aa).

Residues 13-32 are disordered; it reads DEEIPKPGTPSAPPDDDDLW. The short motif at 35–38 is the PPXY motif element; that stretch reads PPEY.

Belongs to the lyssavirus matrix protein family. As to quaternary structure, homomultimer. Interacts with nucleoprotein and with the cytoplasmic domain of glycoprotein.

It is found in the virion membrane. The protein resides in the host endomembrane system. Functionally, plays a major role in assembly and budding of virion. Completely covers the ribonucleoprotein coil and keep it in condensed bullet-shaped form. Inhibits viral transcription and stimulates replication. Plays a major role in early induction of TRAIL-mediated apoptosis in infected neurons. This Lagos bat virus (LBV) protein is Matrix protein (M).